We begin with the raw amino-acid sequence, 135 residues long: Mini-ribonuclease 3 (135 aa).

Asp19 is an active-site residue.

Belongs to the MrnC RNase family. Homodimer. The cofactor is Mg(2+).

It is found in the cytoplasm. In terms of biological role, involved in correct processing of both the 5' and 3' ends of 23S rRNA precursor. Processes 30S rRNA precursor transcript even in absence of ribonuclease 3 (Rnc); Rnc processes 30S rRNA into smaller rRNA precursors. The polypeptide is Mini-ribonuclease 3 (Gloeobacter violaceus (strain ATCC 29082 / PCC 7421)).